We begin with the raw amino-acid sequence, 393 residues long: S-adenosylmethionine synthase (393 aa).

His-17 contacts ATP. Asp-19 is a Mg(2+) binding site. K(+) is bound at residue Glu-45. L-methionine contacts are provided by Glu-58 and Gln-106. The tract at residues 106–116 (QSAHIAQGVDA) is flexible loop. ATP contacts are provided by residues 171–173 (DAK), 237–238 (KF), Asp-246, 252–253 (RK), Ala-269, and Lys-273. Asp-246 serves as a coordination point for L-methionine. Lys-277 contacts L-methionine.

The protein belongs to the AdoMet synthase family. As to quaternary structure, homotetramer; dimer of dimers. Mg(2+) is required as a cofactor. The cofactor is K(+).

The protein resides in the cytoplasm. The catalysed reaction is L-methionine + ATP + H2O = S-adenosyl-L-methionine + phosphate + diphosphate. It functions in the pathway amino-acid biosynthesis; S-adenosyl-L-methionine biosynthesis; S-adenosyl-L-methionine from L-methionine: step 1/1. Catalyzes the formation of S-adenosylmethionine (AdoMet) from methionine and ATP. The overall synthetic reaction is composed of two sequential steps, AdoMet formation and the subsequent tripolyphosphate hydrolysis which occurs prior to release of AdoMet from the enzyme. The chain is S-adenosylmethionine synthase from Ruegeria sp. (strain TM1040) (Silicibacter sp.).